Consider the following 261-residue polypeptide: Kallikrein 1-related peptidase b9 (261 aa).

An N-terminal signal peptide occupies residues Met1–Ala18. Residues Pro19 to Arg24 constitute a propeptide, activation peptide. The Peptidase S1 domain occupies Ile25–Ala258. Cystine bridges form between Cys31-Cys173, Cys50-Cys66, Cys152-Cys219, Cys184-Cys198, and Cys209-Cys234. His65 (charge relay system) is an active-site residue. N-linked (GlcNAc...) asparagine glycosylation is present at Asn102. Asp120 functions as the Charge relay system in the catalytic mechanism. Catalysis depends on Ser213, which acts as the Charge relay system.

This sequence belongs to the peptidase S1 family. Kallikrein subfamily.

It catalyses the reaction Preferential cleavage of Arg-|-Xaa bonds in small molecule substrates. Highly selective action to release kallidin (lysyl-bradykinin) from kininogen involves hydrolysis of Met-|-Xaa or Leu-|-Xaa.. Functionally, glandular kallikreins cleave Met-Lys and Arg-Ser bonds in kininogen to release Lys-bradykinin. The protein is Kallikrein 1-related peptidase b9 (Klk1b9) of Mus musculus (Mouse).